A 285-amino-acid chain; its full sequence is HTH-type transcriptional regulator MurR (285 aa).

Residues 1-77 enclose the HTH rpiR-type domain; that stretch reads MLYLTKIRNA…MALIGEYSAS (77 aa). Residues 37–56 constitute a DNA-binding region (H-T-H motif); it reads SRKMAKQLGISQSSIVKFAQ. Residues 128–268 form the SIS domain; it reads IIEVISKAPF…FVGLVQLNDV (141 aa).

Homotetramer.

It functions in the pathway amino-sugar metabolism; N-acetylmuramate degradation [regulation]. Its function is as follows. Represses the expression of the murPQ operon involved in the uptake and degradation of N-acetylmuramic acid (MurNAc). Binds to two adjacent inverted repeats within the operator region. MurNAc 6-phosphate, the substrate of MurQ, is the specific inducer that weakens binding of MurR to the operator. The polypeptide is HTH-type transcriptional regulator MurR (Escherichia coli O157:H7).